The following is a 205-amino-acid chain: Methylthioribulose-1-phosphate dehydratase (205 aa).

The Zn(2+) site is built by histidine 96 and histidine 98.

The protein belongs to the aldolase class II family. MtnB subfamily. Zn(2+) is required as a cofactor.

The catalysed reaction is 5-(methylsulfanyl)-D-ribulose 1-phosphate = 5-methylsulfanyl-2,3-dioxopentyl phosphate + H2O. It participates in amino-acid biosynthesis; L-methionine biosynthesis via salvage pathway; L-methionine from S-methyl-5-thio-alpha-D-ribose 1-phosphate: step 2/6. Its function is as follows. Catalyzes the dehydration of methylthioribulose-1-phosphate (MTRu-1-P) into 2,3-diketo-5-methylthiopentyl-1-phosphate (DK-MTP-1-P). The protein is Methylthioribulose-1-phosphate dehydratase of Exiguobacterium sp. (strain ATCC BAA-1283 / AT1b).